The following is a 304-amino-acid chain: Bifunctional protein FolD (304 aa).

Residues 176–178 (GAS), Ile201, and Ile242 contribute to the NADP(+) site.

Belongs to the tetrahydrofolate dehydrogenase/cyclohydrolase family. Homodimer.

It carries out the reaction (6R)-5,10-methylene-5,6,7,8-tetrahydrofolate + NADP(+) = (6R)-5,10-methenyltetrahydrofolate + NADPH. It catalyses the reaction (6R)-5,10-methenyltetrahydrofolate + H2O = (6R)-10-formyltetrahydrofolate + H(+). The protein operates within one-carbon metabolism; tetrahydrofolate interconversion. Its function is as follows. Catalyzes the oxidation of 5,10-methylenetetrahydrofolate to 5,10-methenyltetrahydrofolate and then the hydrolysis of 5,10-methenyltetrahydrofolate to 10-formyltetrahydrofolate. This chain is Bifunctional protein FolD, found in Gluconobacter oxydans (strain 621H) (Gluconobacter suboxydans).